The following is a 231-amino-acid chain: Putative cobalt transport protein CbiM 2 (231 aa).

Helical transmembrane passes span 8–28, 41–61, 75–95, 108–128, 136–156, and 176–196; these read LPIG…IYGI, VLPL…LKIP, LSAA…VLLF, LGAN…LVFV, VGIG…TYTV, and IAFA…EGII.

The protein belongs to the CbiM family. In terms of assembly, forms an energy-coupling factor (ECF) transporter complex composed of an ATP-binding protein (A component, CbiO), a transmembrane protein (T component, CbiQ) and 2 possible substrate-capture proteins (S components, CbiM and CbiN) of unknown stoichimetry.

It is found in the cell membrane. The protein operates within cofactor biosynthesis; adenosylcobalamin biosynthesis. In terms of biological role, part of the energy-coupling factor (ECF) transporter complex CbiMNOQ involved in cobalt import. The protein is Putative cobalt transport protein CbiM 2 of Methanocorpusculum labreanum (strain ATCC 43576 / DSM 4855 / Z).